The chain runs to 138 residues: Eukaryotic translation initiation factor 1A (138 aa).

Over residues 1-15 (MPKNKGKGGKNRRRG) the composition is skewed to basic residues. The disordered stretch occupies residues 1–28 (MPKNKGKGGKNRRRGKNENENEKRELTY). The segment covering 16 to 27 (KNENENEKRELT) has biased composition (basic and acidic residues). The 75-residue stretch at 22 to 96 (EKRELTYAEE…EKGDVILKYT (75 aa)) folds into the S1-like domain.

Belongs to the eIF-1A family.

Functionally, seems to be required for maximal rate of protein biosynthesis. Enhances ribosome dissociation into subunits and stabilizes the binding of the initiator Met-tRNA(I) to 40 S ribosomal subunits. In Schizosaccharomyces pombe (strain 972 / ATCC 24843) (Fission yeast), this protein is Eukaryotic translation initiation factor 1A (tif11).